The chain runs to 90 residues: Probable Fe(2+)-trafficking protein (90 aa).

It belongs to the Fe(2+)-trafficking protein family.

Could be a mediator in iron transactions between iron acquisition and iron-requiring processes, such as synthesis and/or repair of Fe-S clusters in biosynthetic enzymes. The protein is Probable Fe(2+)-trafficking protein of Polaromonas sp. (strain JS666 / ATCC BAA-500).